The following is a 470-amino-acid chain: MASDAPPTSMLQPEERNYSQVVFSRVEQSYVPGIDIICYFTYTSGFHPAKKDWVGIFKVSWKTTREYYTWVSADCEEQGLEKRVTFKAYYLPKESDDYYQFCYVDQKGEVRGVSIPFQLCRKIQDEGEEDILLVTTEEEAQGMKEKQRVLEEKVAALEKDKCTLQDECTQLALEQKNKAALIESLQAQQLECAKKNEELDQQNQELERQLEEEKCKNGSLHLKVVSAEEERERVQNDIRSLQLEQNQLKEENMELHKHTNDMEFSLKKYSEEAKNQEEEVQELKDKLWDAEAKHHLLQVQLQDIQMEKKKDKYSIELLTKEAEKVADLRQNLEKKDKTMETMEKQLAQLQRENATVLRQMEDLSYTLELRKAEISDMQQQRVRDGAEIEHLNRLLTEQSSSTPRNQGLFFQNPYESESLISFANEPQPGEAPGGSSVRHVQMQCPECGSEFENFQVFQDHIFCHDLESTE.

Residues 131–134 (ILLV) carry the CLIR motif. Residues 132-368 (LLVTTEEEAQ…QMEDLSYTLE (237 aa)) are a coiled coil. The LIR-like motif lies at 201–204 (QQNQ). The UBZ1-type zinc finger occupies 441-464 (QMQCPECGSEFENFQVFQDHIFCH). The Zn(2+) site is built by Cys444, Cys447, His460, and His464.

The protein belongs to the CALCOCO family.

The protein localises to the cytoplasm. Its subcellular location is the perinuclear region. It localises to the cytoskeleton. The protein resides in the cytoplasmic vesicle. It is found in the autophagosome membrane. Functionally, xenophagy-specific receptor required for autophagy-mediated intracellular bacteria degradation. Acts as an effector protein of galectin-sensed membrane damage that restricts the proliferation of infecting pathogens upon entry into the cytosol by targeting galectin-associated bacteria for autophagy. Initially orchestrates bacteria targeting to autophagosomes and subsequently ensures pathogen degradation by regulating pathogen-containing autophagosome maturation. May play a role in ruffle formation and actin cytoskeleton organization and seems to negatively regulate constitutive secretion. This chain is Calcium-binding and coiled-coil domain-containing protein 2, found in Xenopus tropicalis (Western clawed frog).